Consider the following 255-residue polypeptide: H-2 class II histocompatibility antigen, E-D alpha chain (255 aa).

Residues 1 to 25 form the signal peptide; sequence MATIGALVLRFFFIAVLMSSQKSWA. The tract at residues 26 to 109 is alpha-1; sequence IKEEHTIIQA…ERSNNTPDAN (84 aa). Over 26–216 the chain is Extracellular; the sequence is IKEEHTIIQA…EKTLLPETKE (191 aa). An alpha-2 region spans residues 110 to 203; it reads VAPEVTVLSR…GLEEPLRKTW (94 aa). The Ig-like C1-type domain maps to 112–204; the sequence is PEVTVLSRSP…LEEPLRKTWE (93 aa). A disulfide bond links Cys132 and Cys188. Asn143 is a glycosylation site (N-linked (GlcNAc...) asparagine). The connecting peptide stretch occupies residues 204–216; that stretch reads EFEEKTLLPETKE. The helical transmembrane segment at 217–242 threads the bilayer; it reads NVMCALGLFVGLVGIVVGIILIMKGI. The Cytoplasmic segment spans residues 243–255; sequence KKRNVVERRQGAL.

Belongs to the MHC class II family.

The protein localises to the membrane. In Mus musculus (Mouse), this protein is H-2 class II histocompatibility antigen, E-D alpha chain (H2-Ea).